The following is a 229-amino-acid chain: GTP cyclohydrolase 1 (229 aa).

Zn(2+) is bound by residues C116, H119, and C187.

Belongs to the GTP cyclohydrolase I family. In terms of assembly, toroid-shaped homodecamer, composed of two pentamers of five dimers.

It catalyses the reaction GTP + H2O = 7,8-dihydroneopterin 3'-triphosphate + formate + H(+). The protein operates within cofactor biosynthesis; 7,8-dihydroneopterin triphosphate biosynthesis; 7,8-dihydroneopterin triphosphate from GTP: step 1/1. The polypeptide is GTP cyclohydrolase 1 (Synechococcus sp. (strain JA-3-3Ab) (Cyanobacteria bacterium Yellowstone A-Prime)).